Here is a 297-residue protein sequence, read N- to C-terminus: uncharacterized protein (297 aa).

This sequence belongs to the glycosyltransferase 2 family.

This is an uncharacterized protein from Mycoplasma genitalium (strain ATCC 33530 / DSM 19775 / NCTC 10195 / G37) (Mycoplasmoides genitalium).